Here is a 90-residue protein sequence, read N- to C-terminus: Bombyxin B-6 (90 aa).

The first 20 residues, 1 to 20 (MMKTSVMFMLVVVISLMCSS), serve as a signal peptide directing secretion. 3 disulfides stabilise this stretch: cysteine 30-cysteine 76, cysteine 42-cysteine 89, and cysteine 75-cysteine 80. Positions 49–67 (GVAQYAPYFWTRQYLGSRG) are cleaved as a propeptide — c peptide like.

Belongs to the insulin family. Heterodimer of a B chain and an A chain linked by two disulfide bonds.

It localises to the secreted. In terms of biological role, brain peptide responsible for activation of prothoracic glands to produce ecdysone in insects. This chain is Bombyxin B-6 (BBXB6), found in Bombyx mori (Silk moth).